The following is a 267-amino-acid chain: Tryptophan synthase alpha chain (267 aa).

Catalysis depends on proton acceptor residues glutamate 47 and aspartate 58.

It belongs to the TrpA family. In terms of assembly, tetramer of two alpha and two beta chains.

The catalysed reaction is (1S,2R)-1-C-(indol-3-yl)glycerol 3-phosphate + L-serine = D-glyceraldehyde 3-phosphate + L-tryptophan + H2O. Its pathway is amino-acid biosynthesis; L-tryptophan biosynthesis; L-tryptophan from chorismate: step 5/5. Its function is as follows. The alpha subunit is responsible for the aldol cleavage of indoleglycerol phosphate to indole and glyceraldehyde 3-phosphate. The protein is Tryptophan synthase alpha chain of Chlorobium phaeovibrioides (strain DSM 265 / 1930) (Prosthecochloris vibrioformis (strain DSM 265)).